The following is a 65-amino-acid chain: Conotoxin tx3c (65 aa).

The first 19 residues, 1–19, serve as a signal peptide directing secretion; that stretch reads MFKLGVLLTICLLLFSLNA. The propeptide occupies 20–50; that stretch reads VPLDGDQPADQPAERLLDDISFENNPFYDPA. Cystine bridges form between C53–C64, C54–C60, and C57–C63. Position 62 is a 4-hydroxyproline; partial (P62). A Cysteine amide modification is found at C64.

In terms of processing, the hydroxylation at Pro-62 is observed in PubMed:15924437, PubMed:19380747 and PubMed:22709442, and the non-hydroxylation is described in PubMed:22709442. Expressed by the venom duct.

It localises to the secreted. Functionally, causes scratching in mice. The sequence is that of Conotoxin tx3c from Conus textile (Cloth-of-gold cone).